A 205-amino-acid chain; its full sequence is Small ribosomal subunit protein uS4 (205 aa).

The span at 1 to 12 (MSKRVQAKHKLD) shows a compositional bias: basic residues. Residues 1-49 (MSKRVQAKHKLDRRMGQNIWGRPKSPVNRREYGPGQHGQRRKGKMSDFG) are disordered. An S4 RNA-binding domain is found at 94–155 (RRLDAVVYRS…ASRQLEIVVV (62 aa)).

Belongs to the universal ribosomal protein uS4 family. In terms of assembly, part of the 30S ribosomal subunit. Contacts protein S5. The interaction surface between S4 and S5 is involved in control of translational fidelity.

Its function is as follows. One of the primary rRNA binding proteins, it binds directly to 16S rRNA where it nucleates assembly of the body of the 30S subunit. Functionally, with S5 and S12 plays an important role in translational accuracy. In Methylorubrum extorquens (strain CM4 / NCIMB 13688) (Methylobacterium extorquens), this protein is Small ribosomal subunit protein uS4.